The chain runs to 213 residues: Superoxide dismutase [Mn] (213 aa).

Mn(2+)-binding residues include H27, H82, D168, and H172.

The protein belongs to the iron/manganese superoxide dismutase family. Homodimer. It depends on Mn(2+) as a cofactor.

The catalysed reaction is 2 superoxide + 2 H(+) = H2O2 + O2. Its function is as follows. Destroys superoxide anion radicals which are normally produced within the cells and which are toxic to biological systems. This chain is Superoxide dismutase [Mn] (sodA), found in Mannheimia haemolytica (Pasteurella haemolytica).